The sequence spans 173 residues: RNA pyrophosphohydrolase (173 aa).

Residues 11–164 (PYRRSVGILV…KKHVYMKIVN (154 aa)) enclose the Nudix hydrolase domain. The Nudix box motif lies at 52–73 (GGIDENEEPLDAARRELYEETG).

Belongs to the Nudix hydrolase family. RppH subfamily. Requires a divalent metal cation as cofactor.

Accelerates the degradation of transcripts by removing pyrophosphate from the 5'-end of triphosphorylated RNA, leading to a more labile monophosphorylated state that can stimulate subsequent ribonuclease cleavage. This Bartonella henselae (strain ATCC 49882 / DSM 28221 / CCUG 30454 / Houston 1) (Rochalimaea henselae) protein is RNA pyrophosphohydrolase.